We begin with the raw amino-acid sequence, 260 residues long: Snake venom serine protease homolog 2 (260 aa).

An N-terminal signal peptide occupies residues 1 to 18 (MVLIRVLANLLVLQLSYA). Positions 19–24 (QKSSEL) are excised as a propeptide. The region spanning 25 to 251 (VIGGDECNIN…YTDWIQSIIA (227 aa)) is the Peptidase S1 domain. Cystine bridges form between Cys31–Cys165, Cys52–Cys68, Cys100–Cys258, Cys144–Cys212, Cys176–Cys191, and Cys202–Cys227. An N-linked (GlcNAc...) asparagine glycan is attached at Asn123. A glycan (N-linked (GlcNAc...) asparagine) is linked at Asn253.

It belongs to the peptidase S1 family. Snake venom subfamily. Expressed by the venom gland.

The protein resides in the secreted. Snake venom serine protease homolog that may act in the hemostasis system of the prey. This is Snake venom serine protease homolog 2 from Macrovipera lebetinus (Levantine viper).